Reading from the N-terminus, the 718-residue chain is Phenylalanine--tRNA ligase beta subunit (718 aa).

The tRNA-binding domain maps to 39–153 (LNEISGIKFG…IFDLESNPLK (115 aa)). The B5 domain maps to 386–460 (SKKTFLDLNY…RFYGLEKLKD (75 aa)). Mg(2+)-binding residues include Asp438, Asp444, and Asp448.

It belongs to the phenylalanyl-tRNA synthetase beta subunit family. Type 1 subfamily. In terms of assembly, tetramer of two alpha and two beta subunits. It depends on Mg(2+) as a cofactor.

It localises to the cytoplasm. The enzyme catalyses tRNA(Phe) + L-phenylalanine + ATP = L-phenylalanyl-tRNA(Phe) + AMP + diphosphate + H(+). The polypeptide is Phenylalanine--tRNA ligase beta subunit (Mesomycoplasma hyopneumoniae (strain 7448) (Mycoplasma hyopneumoniae)).